Consider the following 350-residue polypeptide: Eukaryotic translation initiation factor 3 subunit I (350 aa).

WD repeat units follow at residues 8-49 (GHER…GTLE), 51-89 (HQGV…CVYT), 91-135 (DSPS…ATLS), 149-188 (SEGS…LVTS), 198-240 (EKNV…KVYK), and 296-335 (GHFG…QDFL).

The protein belongs to the eIF-3 subunit I family. Component of the eukaryotic translation initiation factor 3 (eIF-3) complex.

It is found in the cytoplasm. Functionally, component of the eukaryotic translation initiation factor 3 (eIF-3) complex, which is involved in protein synthesis of a specialized repertoire of mRNAs and, together with other initiation factors, stimulates binding of mRNA and methionyl-tRNAi to the 40S ribosome. The eIF-3 complex specifically targets and initiates translation of a subset of mRNAs involved in cell proliferation. The sequence is that of Eukaryotic translation initiation factor 3 subunit I from Candida albicans (strain SC5314 / ATCC MYA-2876) (Yeast).